The sequence spans 259 residues: Polycomb group RING finger protein 1 (259 aa).

Ala2 carries the N-acetylalanine modification. Ser3 is subject to Phosphoserine. Lys24 is covalently cross-linked (Glycyl lysine isopeptide (Lys-Gly) (interchain with G-Cter in SUMO2)). An RING-type zinc finger spans residues 47-86; it reads CCLCAGYFVDATTITECLHTFCKSCIVKYLQTSKYCPMCN. The required for repressor activity stretch occupies residues 86 to 247; the sequence is NIKIHETQPL…LSRWFGKPSP (162 aa). A Glycyl lysine isopeptide (Lys-Gly) (interchain with G-Cter in SUMO2) cross-link involves residue Lys88. The tract at residues 150-255 is required for the interaction with the KDM2B-SKP1 heterodimeric complex; sequence LPFSSFDHSK…SPLLLQYSVK (106 aa). The segment at 167–255 is RING-finger and WD40-associated ubiquitin-like domain (RAWUL); sufficient for interaction with BCOR and BCORL1; it reads EQLNLCLERL…SPLLLQYSVK (89 aa).

In terms of assembly, interacts with BCORL1, forming heterodimers. The PCGF1-BCORL1 heterodimeric complex interacts with the KDM2B-SKP1 heterodimeric complex to form a homotetrameric polycomb repression complex 1 (PRC1.1). Component of the repressive BCOR complex containing a Polycomb group subcomplex at least composed of RYBP, RING1 and RNF2/RING2. Specifically interacts with BCOR, RING1 and RNF2/RING2. Component of a PRC1-like complex. Interacts with CBX6, CBX7 and CBX8. Interacts with DPPA4, NANOG, POU5F1 and RYBP. As to expression, ubiquitous.

It is found in the nucleus. Component of the Polycomb group (PcG) multiprotein BCOR complex, a complex required to maintain the transcriptionally repressive state of some genes, such as BCL6 and the cyclin-dependent kinase inhibitor, CDKN1A. Transcriptional repressor that may be targeted to the DNA by BCL6; this transcription repressor activity may be related to PKC signaling pathway. Represses CDKN1A expression by binding to its promoter, and this repression is dependent on the retinoic acid response element (RARE element). Promotes cell cycle progression and enhances cell proliferation as well. May have a positive role in tumor cell growth by down-regulating CDKN1A. Component of a Polycomb group (PcG) multiprotein PRC1-like complex, a complex class required to maintain the transcriptionally repressive state of many genes, including Hox genes, throughout development. PcG PRC1 complex acts via chromatin remodeling and modification of histones; it mediates monoubiquitination of histone H2A 'Lys-119', rendering chromatin heritably changed in its expressibility. Within the PRC1-like complex, regulates RNF2 ubiquitin ligase activity. Regulates the expression of DPPA4 and NANOG in the NT2 embryonic carcinoma cells. This chain is Polycomb group RING finger protein 1 (PCGF1), found in Homo sapiens (Human).